The sequence spans 944 residues: Calcium-transporting ATPase type 2C member 2 (944 aa).

At 1 to 104 (MGRRLKFLQK…DNAEPVWKKY (104 aa)) the chain is on the cytoplasmic side. Residues 69–93 (VDLDSGLSEFAVAQRRLVHGWNEFV) form an interaction with ORAI1 region. Residues 105-125 (LDQFRNPLILLLLGSSVVSVL) traverse the membrane as a helical segment. Residues 126–127 (TK) are Extracellular-facing. Residues 128 to 148 (EYEDAVSIALAVLIVVTVGFI) traverse the membrane as a helical segment. Topologically, residues 149 to 229 (QEYRSEKSLE…EVEPCGKTDS (81 aa)) are cytoplasmic. Residues 230–250 (PLADGGDLSTLSNVVFMGTLV) traverse the membrane as a helical segment. The Extracellular portion of the chain corresponds to 251–291 (QCGKGQGVVIGTGEQSQFGEVFKMMRAEETPKTPLQKSMDK). T262 carries the phosphothreonine modification. Phosphoserine is present on S266. The helical transmembrane segment at 292–312 (LGKQLTIFSFGIIGLLMLVGW) threads the bilayer. Residues 313 to 329 (VQGKPFLSMFTVGVSLA) lie on the Cytoplasmic side of the membrane. The Ca(2+) site is built by V330, A331, I333, and E335. The chain crosses the membrane as a helical span at residues 330-350 (VAAIPEGLPIVVMVTLVLGVL). Residues 351-748 (RMAKKRVIVK…IAALSLITLS (398 aa)) are Extracellular-facing. The 4-aspartylphosphate intermediate role is filled by D377. Residues D672 and D676 each coordinate Mg(2+). The chain crosses the membrane as a helical span at residues 749 to 769 (TVCNLPSPLNAMQILWVNIIM). Ca(2+) contacts are provided by N766 and D770. Residues 770–802 (DGPPAQSLGVEPVDRDALRRPPRSVGDTILNRA) lie on the Cytoplasmic side of the membrane. The helical transmembrane segment at 803–823 (LILRVLMSAAVIIGGTLFIFW) threads the bilayer. Residues 824–835 (REIPANGTSTPR) lie on the Extracellular side of the membrane. A helical membrane pass occupies residues 836–853 (TTTMAFTCFVFFDLFNAL). The Cytoplasmic segment spans residues 854–872 (SCRSQTKLIFEIGFFRNRM). The chain crosses the membrane as a helical span at residues 873–893 (FLYSVLGSLLGQLAVIYAPPL). At 894–903 (QKVFQTENLS) the chain is on the extracellular side. Residues 904–924 (ALDLLLLTGLASSVFILSELL) traverse the membrane as a helical segment. Topologically, residues 925–944 (KLWEKFLSRARPTQMLPEAV) are cytoplasmic.

Belongs to the cation transport ATPase (P-type) (TC 3.A.3) family. Type IIA subfamily. In terms of assembly, interacts (via N-terminus) with ORAI1 (via N- and C-termini); this interaction regulates Ca(2+) influx at the plasma membrane. In terms of tissue distribution, expressed in hippocampal neurons (at protein level). Expressed in lactating mammary epithelium (at protein level).

The protein resides in the golgi apparatus. It localises to the trans-Golgi network membrane. The protein localises to the cell membrane. Its subcellular location is the basolateral cell membrane. It catalyses the reaction Ca(2+)(in) + ATP + H2O = Ca(2+)(out) + ADP + phosphate + H(+). The catalysed reaction is Mn(2+)(in) + ATP + H2O = Mn(2+)(out) + ADP + phosphate + H(+). Its function is as follows. ATP-driven pump that supplies the Golgi apparatus with Ca(2+) and Mn(2+) ions, both essential cofactors for processing and trafficking of newly synthesized proteins in the secretory pathway. Within a catalytic cycle, acquires Ca(2+) or Mn(2+) ions on the cytoplasmic side of the membrane and delivers them to the lumenal side. The transfer of ions across the membrane is coupled to ATP hydrolysis and is associated with a transient phosphorylation that shifts the pump conformation from inward-facing to outward-facing state. Induces Ca(2+) influx independently of its ATP-driven pump function. At the basolateral membrane of mammary epithelial cells, interacts with Ca(2+) channel ORAI1 and mediates Ca(2+) entry independently of the Ca(2+) content of endoplasmic reticulum or Golgi stores. May facilitate transepithelial transport of large quantities of Ca(2+) for milk secretion via activation of Ca(2+) influx channels at the plasma membrane and active Ca(2+) transport at the Golgi apparatus. This chain is Calcium-transporting ATPase type 2C member 2, found in Mus musculus (Mouse).